Here is a 106-residue protein sequence, read N- to C-terminus: BLOC-1-related complex subunit 7 (106 aa).

It belongs to the BORCS7 family. As to quaternary structure, component of the BLOC-one-related complex (BORC) which is composed of BLOC1S1, BLOC1S2, BORCS5, BORCS6, BORCS7, BORCS8, KXD1 and SNAPIN.

The protein localises to the lysosome membrane. In terms of biological role, as part of the BORC complex may play a role in lysosomes movement and localization at the cell periphery. Associated with the cytosolic face of lysosomes, the BORC complex may recruit ARL8B and couple lysosomes to microtubule plus-end-directed kinesin motor. The protein is BLOC-1-related complex subunit 7 of Homo sapiens (Human).